The following is a 62-amino-acid chain: Defensin BmKDfsin6 (62 aa).

Positions 1–24 are cleaved as a signal peptide; that stretch reads MKVIAILFLLAFVLCTMEITMVEA. Cystine bridges form between C28-C49, C35-C57, and C39-C59.

Belongs to the invertebrate defensin family. Type 2 subfamily. In terms of tissue distribution, highly expressed in non-venom gland (hemolymph) and moderately expressed in venom gland.

The protein resides in the secreted. Functionally, antibacterial peptide active against Gram-positive bacteria, but not on Gram-negative bacteria. Also has weak blocking activity on Kv1.1/KCNA1, Kv1.2/KCNA2, Kv1.3/KCNA3, KCa3.1/KCNN4/IK, KCa2.3/KCNN3/SK3 and Kv11.1/KCNH2/ERG1 channels (tested at 1 uM). It inhibits potassium channel current by interacting with the pore region. This Olivierus martensii (Manchurian scorpion) protein is Defensin BmKDfsin6.